Reading from the N-terminus, the 1435-residue chain is Sterol 3-beta-glucosyltransferase (1435 aa).

Disordered regions lie at residues 1 to 26 (MAPD…HQVA), 75 to 107 (SDEE…KFEG), 123 to 169 (RFSS…KDTP), and 185 to 206 (PSFE…RTSP). Residues 85–99 (TRQSSESHINRSSID) show a composition bias toward polar residues. Positions 123–133 (RFSSRSKSKSS) are enriched in low complexity. The span at 134–143 (NTIARGSRTP) shows a compositional bias: polar residues. The span at 189-206 (MPRKSKDPAEVDDERTSP) shows a compositional bias: basic and acidic residues. In terms of domain architecture, GRAM 1 spans 211-258 (ERLMEIFKFETPEDVLEEYPCWLMKSVLLQGYMYITTKHICFYAYLPK). The PH domain maps to 262–360 (EVVKSGYLSK…WVKALQKIIF (99 aa)). Disordered stretches follow at residues 444 to 477 (LSTA…PNAP), 527 to 594 (DLNR…QASA), 610 to 671 (QHSP…QAEI), and 727 to 759 (GKKH…ATPA). A compositionally biased stretch (basic and acidic residues) spans 527-537 (DLNRLTTEHHR). Polar residues-rich tracts occupy residues 539-554 (NSAN…STNR), 628-647 (KSRS…TRTQ), and 657-671 (TTGS…QAEI). The segment covering 729–742 (KHYEEPHGIPRDNE) has biased composition (basic and acidic residues). Residues 760–826 (DRFRDHFALP…KDIENVDKEK (67 aa)) form the GRAM 2 domain. 10 residues coordinate UDP-alpha-D-glucose: serine 949, arginine 950, aspartate 952, alanine 1252, histidine 1254, histidine 1267, glycine 1271, threonine 1272, aspartate 1291, and glutamine 1292.

Belongs to the glycosyltransferase 28 family.

It is found in the cytoplasm. The protein resides in the preautophagosomal structure membrane. It carries out the reaction a sterol + UDP-alpha-D-glucose = a sterol 3-beta-D-glucoside + UDP + H(+). It catalyses the reaction ergosterol + UDP-alpha-D-glucose = ergosteryl 3-beta-D-glucoside + UDP + H(+). Functionally, sterol glycosyltransferase responsible for the glycosylation of ergosterol to form ergosterol-glucoside. The chain is Sterol 3-beta-glucosyltransferase from Sclerotinia sclerotiorum (strain ATCC 18683 / 1980 / Ss-1) (White mold).